The following is a 242-amino-acid chain: UPF0246 protein SPH_1662 (242 aa).

The protein belongs to the UPF0246 family.

This is UPF0246 protein SPH_1662 from Streptococcus pneumoniae (strain Hungary19A-6).